The sequence spans 435 residues: D-amino acid dehydrogenase (435 aa).

Residue 3–17 (VLILGSGVIGTTSAW) coordinates FAD.

Belongs to the DadA oxidoreductase family. Requires FAD as cofactor.

It carries out the reaction a D-alpha-amino acid + A + H2O = a 2-oxocarboxylate + AH2 + NH4(+). It functions in the pathway amino-acid degradation; D-alanine degradation; NH(3) and pyruvate from D-alanine: step 1/1. Its function is as follows. Oxidative deamination of D-amino acids. The sequence is that of D-amino acid dehydrogenase from Xylella fastidiosa (strain M23).